Consider the following 221-residue polypeptide: Lactate racemization regulatory protein (221 aa).

An HTH crp-type domain is found at 139 to 213 (NGKKGAICAF…NHKFIIQDVS (75 aa)). The H-T-H motif DNA-binding region spans 172–192 (NDDIAGFCGISSRSSVNRMLK).

Multimerizes on DNA. Multimerization is required for transcription activation.

L-lactate acts as a positive effector on the binding and multimerization of LarR on DNA, while D-lactate antagonizes the positive effect of L-lactate. Functionally, positive transcriptional regulator that is absolutely required for the expression of lactate racemase (Lar) activity. Controls Lar expression by sensing the L-/D-lactate ration. Binds to a 16-bp palindromic sequence (Lar box motif) that is present in the larR-larA intergenic region, allowing transcription of the larABCDE operon. This chain is Lactate racemization regulatory protein, found in Lactiplantibacillus plantarum (strain ATCC BAA-793 / NCIMB 8826 / WCFS1) (Lactobacillus plantarum).